The following is a 343-amino-acid chain: L-threonine 3-dehydrogenase (343 aa).

Cys-40 serves as a coordination point for Zn(2+). Active-site charge relay system residues include Thr-42 and His-45. The Zn(2+) site is built by His-65, Glu-66, Cys-95, Cys-98, Cys-101, and Cys-109. Residues Ile-177, Asp-197, Arg-202, 264 to 266, and 288 to 289 each bind NAD(+); these read LGI and IY.

This sequence belongs to the zinc-containing alcohol dehydrogenase family. As to quaternary structure, homotetramer. Zn(2+) serves as cofactor.

The protein localises to the cytoplasm. The enzyme catalyses L-threonine + NAD(+) = (2S)-2-amino-3-oxobutanoate + NADH + H(+). It participates in amino-acid degradation; L-threonine degradation via oxydo-reductase pathway; glycine from L-threonine: step 1/2. In terms of biological role, catalyzes the NAD(+)-dependent oxidation of L-threonine to 2-amino-3-ketobutyrate. This chain is L-threonine 3-dehydrogenase, found in Aliivibrio fischeri (strain MJ11) (Vibrio fischeri).